Reading from the N-terminus, the 382-residue chain is Lipid-A-disaccharide synthase (382 aa).

This sequence belongs to the LpxB family.

It carries out the reaction 2-N,3-O-bis[(3R)-3-hydroxytetradecanoyl]-alpha-D-glucosaminyl 1-phosphate + UDP-2-N,3-O-bis[(3R)-3-hydroxytetradecanoyl]-alpha-D-glucosamine = lipid A disaccharide (E. coli) + UDP + H(+). It catalyses the reaction a lipid X + a UDP-2-N,3-O-bis[(3R)-3-hydroxyacyl]-alpha-D-glucosamine = a lipid A disaccharide + UDP + H(+). It functions in the pathway glycolipid biosynthesis; lipid IV(A) biosynthesis; lipid IV(A) from (3R)-3-hydroxytetradecanoyl-[acyl-carrier-protein] and UDP-N-acetyl-alpha-D-glucosamine: step 5/6. Functionally, condensation of UDP-2,3-diacylglucosamine and 2,3-diacylglucosamine-1-phosphate to form lipid A disaccharide, a precursor of lipid A, a phosphorylated glycolipid that anchors the lipopolysaccharide to the outer membrane of the cell. This Shigella flexneri protein is Lipid-A-disaccharide synthase.